A 121-amino-acid chain; its full sequence is SPbeta prophage-derived uncharacterized protein YorW (121 aa).

In Bacillus subtilis (strain 168), this protein is SPbeta prophage-derived uncharacterized protein YorW (yorW).